The following is an 89-amino-acid chain: Putative defensin-like protein 254 (89 aa).

The N-terminal stretch at 1-20 (MHNISFKLLLLCDLFLSSSS) is a signal peptide. 2 disulfide bridges follow: C31–C48 and C37–C55.

It belongs to the DEFL family.

It localises to the secreted. The sequence is that of Putative defensin-like protein 254 from Arabidopsis thaliana (Mouse-ear cress).